The following is a 341-amino-acid chain: Probable 2' cyclic ADP-D-ribose synthase TcpO (341 aa).

The region spanning 204–336 (KEYDIFVSHS…EIIHEILERI (133 aa)) is the TIR domain. NAD(+) is bound by residues 213-214 (SS) and Lys-243. Residue Glu-279 is part of the active site.

The catalysed reaction is NAD(+) + H2O = ADP-D-ribose + nicotinamide + H(+). The enzyme catalyses NAD(+) = 2'cADPR + nicotinamide + H(+). In terms of biological role, NAD(+) hydrolase (NADase) that catalyzes cleavage of NAD(+) into ADP-D-ribose (ADPR) and nicotinamide. In addition to ADPR, also generates a cyclization variant of cyclic ADPR (cADPR), termed v-cADPR (probably 2'cADPR). The sequence is that of Probable 2' cyclic ADP-D-ribose synthase TcpO from Methanobrevibacter olleyae.